Reading from the N-terminus, the 1010-residue chain is Antigenic heat-stable 120 kDa protein (1010 aa).

2 disordered regions span residues 1–34 (DTSE…QTTT) and 347–396 (GQSK…QSQQ). The span at 12–27 (EYTEEQKQTLEQEQKE) shows a compositional bias: basic and acidic residues. 2 stretches are compositionally biased toward polar residues: residues 347-372 (GQSK…QHKQ) and 379-396 (PTNQ…QSQQ).

The protein localises to the cytoplasm. In Rickettsia parkeri, this protein is Antigenic heat-stable 120 kDa protein (sca4).